A 72-amino-acid chain; its full sequence is Large ribosomal subunit protein bL28 (72 aa).

Belongs to the bacterial ribosomal protein bL28 family.

The protein is Large ribosomal subunit protein bL28 of Chlorobium phaeobacteroides (strain BS1).